The following is a 143-amino-acid chain: Transcriptional regulator MraZ (143 aa).

SpoVT-AbrB domains lie at 5 to 47 (EYQH…PMSE) and 76 to 119 (ATEC…SKEI).

The protein belongs to the MraZ family. As to quaternary structure, forms oligomers.

Its subcellular location is the cytoplasm. It is found in the nucleoid. This is Transcriptional regulator MraZ from Bacillus licheniformis (strain ATCC 14580 / DSM 13 / JCM 2505 / CCUG 7422 / NBRC 12200 / NCIMB 9375 / NCTC 10341 / NRRL NRS-1264 / Gibson 46).